Reading from the N-terminus, the 35-residue chain is Coatomer subunit alpha (35 aa).

As to quaternary structure, oligomeric complex that consists of at least the alpha, beta, beta', gamma, delta, epsilon and zeta subunits. Interacts with SCYL1. Interacts with JAGN1. Interacts with TMEM41B. Interacts with SVEP1. Probably interacts with PEX11A. As to expression, gastric, duodenal and jejunal mucosa. Circulates in the blood. Seems to be confined to specific endocrine cells.

Xenin stimulates exocrine pancreatic secretion. It inhibits pentagastrin-stimulated secretion of acid, to induce exocrine pancreatic secretion and to affect small and large intestinal motility. In the gut, xenin interacts with the neurotensin receptor. In Canis lupus familiaris (Dog), this protein is Coatomer subunit alpha (COPA).